A 293-amino-acid chain; its full sequence is MKFLTAASLLTLSSSALAAIKDIQLYAQSSNNEVNDFGISSRHEGAALNYLFLAAPGVAENLKYDDETKTVYTELKAGSSTVRQPLNVGNTVLQLGGSGDGTKVDIAEDGTLSFDGSDSVGAAKNINDPYNYSKDSYAVVKGGDGAIPIKLVAKFTGDDKESASSSSSSAAPEPTASSSEAPKETPVYSNSTVTLYTTYCPLSTTITLTVCSDVCTPTVIETSGSVTVSSVQVPSKTASSEAAPPKTTVDSVSKPAPSGKKPTAAVTSFEGAANALTGGSVAIAVAAAIGLVF.

The signal sequence occupies residues 1-18 (MKFLTAASLLTLSSSALA). Asparagine 131 carries N-linked (GlcNAc...) asparagine glycosylation. Residues 161–187 (ESASSSSSSAAPEPTASSSEAPKETPV) form a disordered region. Residues 163–180 (ASSSSSSAAPEPTASSSE) show a composition bias toward low complexity. A glycan (N-linked (GlcNAc...) asparagine) is linked at asparagine 190. A disordered region spans residues 233 to 262 (VPSKTASSEAAPPKTTVDSVSKPAPSGKKP). The GPI-anchor amidated glycine moiety is linked to residue glycine 271. Residues 272 to 293 (AANALTGGSVAIAVAAAIGLVF) constitute a propeptide, removed in mature form.

Belongs to the SRP1/TIP1 family. In terms of processing, the GPI-anchor is attached to the protein in the endoplasmic reticulum and serves to target the protein to the cell surface. There, the glucosamine-inositol phospholipid moiety is cleaved off and the GPI-modified mannoprotein is covalently attached via its lipidless GPI glycan remnant to the 1,6-beta-glucan of the outer cell wall layer.

Its subcellular location is the secreted. It localises to the cell wall. It is found in the membrane. Its function is as follows. Component of the cell wall involved in virulence which plays a role in the relationship between C.albicans and the host. Involved in the regulation or assembly of chitin within the cell wall. In Candida albicans (strain SC5314 / ATCC MYA-2876) (Yeast), this protein is Cell wall protein PGA31 (PGA31).